The chain runs to 495 residues: UDP-glycosyltransferase 73C12 (495 aa).

Catalysis depends on His24, which acts as the Proton acceptor. Position 24 (His24) interacts with an anthocyanidin. Asp129 functions as the Charge relay in the catalytic mechanism. UDP-alpha-D-glucose is bound by residues Ala356, Gln358, His373, Trp376, Asn377, Ser378, and Glu381. Ala396 provides a ligand contact to an anthocyanidin. The UDP-alpha-D-glucose site is built by Asp397 and Gln398.

Belongs to the UDP-glycosyltransferase family.

The enzyme catalyses oleanolate + UDP-alpha-D-glucose = oleanolate 3-O-beta-D-glucoside + UDP + H(+). Catalyzes the transfer of a glucose (Glc) moiety from UDP-Glc to the C-3 position of the oleanane sapogenins oleanolate and hederagenin, and to the C-28 carboxylic group of the lupane sapogenin betulinate. The monoglucosylated hederagenin 3-O-beta-D-glucoside is a feeding deterrent of the yellow-striped flea beetle (Phyllotreta nemorum). The sequence is that of UDP-glycosyltransferase 73C12 from Barbarea vulgaris (Yellow rocket).